An 843-amino-acid polypeptide reads, in one-letter code: Tetratricopeptide repeat protein 7B (843 aa).

The TPR 1 repeat unit spans residues 97–131 (QESNLVMAKLTYVEGDYKEALNIYARVGLDDLPLT). Phosphoserine is present on residues Ser-160 and Ser-202. 6 TPR repeats span residues 219-252 (ETGLQRAHVLYFKNGNLTRGVGRFRELLRAVETR), 363-396 (SVVYDLLTIALGRRGQYEMLSECLERAMKFAFEE), 397-430 (FHLWYQFALSLMAAGKSARAVKVLKECIRLKPDD), 479-514 (TYSLQATDASLRGMQEGLQRKALLAFQRAHSLSPTD), 516-548 (QAAFYLALQLAISRQIPEALGYVRQALQLQGDD), and 549-582 (ANSLHLLALLLSAQKHYHDALNIIDMALSEYPEN). A phosphoserine mark is found at Ser-625, Ser-629, Ser-630, Ser-673, Ser-677, Ser-678, and Ser-681. TPR repeat units follow at residues 696-729 (AQIWLHAAEVYIGIGKPAEATACTQEAANLFPMS), 730-763 (HNVLYMRGQVAELRGHFDEARRWYEEALSISPTH), 765-797 (KSMQRLALVLHQLGRYSLAEKILRDAVQVNSTA), and 798-831 (HEVWNGLGEVLQAQGNDAAATECFLTALELEASS).

In terms of assembly, component of a phosphatidylinositol 4-kinase (PI4K) complex, composed of PI4KA, EFR3 (EFR3A or EFR3B), TTC7 (TTC7A or TTC7B) and HYCC (HYCC1 or HYCC2). Interacts with PI4KA, interaction is direct. Interacts with EFR3 (EFR3A or EFR3B), interaction is direct. Interacts with HYCC (HYCC1 or HYCC2), interaction is direct. Association with the PI4K complex is strongly reduced by TMEM150A.

It is found in the cytoplasm. The protein localises to the cytosol. The protein resides in the cell membrane. In terms of biological role, component of a complex required to localize phosphatidylinositol 4-kinase (PI4K) to the plasma membrane. The complex acts as a regulator of phosphatidylinositol 4-phosphate (PtdIns(4)P) synthesis. In the complex, plays a central role in bridging PI4KA to EFR3B and HYCC1, via direct interactions. The polypeptide is Tetratricopeptide repeat protein 7B (Mus musculus (Mouse)).